Consider the following 1368-residue polypeptide: DNA-directed RNA polymerase subunit beta (1368 aa).

This sequence belongs to the RNA polymerase beta chain family. The RNAP catalytic core consists of 2 alpha, 1 beta, 1 beta' and 1 omega subunit. When a sigma factor is associated with the core the holoenzyme is formed, which can initiate transcription.

It carries out the reaction RNA(n) + a ribonucleoside 5'-triphosphate = RNA(n+1) + diphosphate. Its function is as follows. DNA-dependent RNA polymerase catalyzes the transcription of DNA into RNA using the four ribonucleoside triphosphates as substrates. The chain is DNA-directed RNA polymerase subunit beta from Burkholderia ambifaria (strain MC40-6).